The sequence spans 123 residues: uncharacterized protein (123 aa).

Residues 1 to 21 (MHIIAKSILLMAVSFLVIIFT) form a helical membrane-spanning segment.

Its subcellular location is the membrane. This is an uncharacterized protein from Methanocaldococcus jannaschii (strain ATCC 43067 / DSM 2661 / JAL-1 / JCM 10045 / NBRC 100440) (Methanococcus jannaschii).